The primary structure comprises 429 residues: FAD-dependent monooxygenase azaH (429 aa).

A helical membrane pass occupies residues 5–25 (SIEVAIIGAGITGITLALGLL). FAD contacts are provided by Glu35 and Gly48. N-linked (GlcNAc...) asparagine glycosylation is found at Asn75 and Asn87. Arg116 serves as a coordination point for FAD. Arg199 is a catalytic residue. 2 residues coordinate FAD: Asp315 and Ala328.

Belongs to the paxM FAD-dependent monooxygenase family. Requires FAD as cofactor.

The protein localises to the membrane. It functions in the pathway secondary metabolite biosynthesis. In terms of biological role, FAD-dependent monooxygenase; part of the gene cluster that mediates the biosynthesis of azaphilones, a class of fungal metabolites characterized by a highly oxygenated pyrano-quinone bicyclic core and exhibiting a broad range of bioactivities. In the first step, the non-reducing polyketide synthase azaA forms the hexaketide precursor from successive condensations of five malonyl-CoA units, presumably with a simple acetyl-CoA starter unit. The reactive polyketide chain then undergoes a PT-mediated C2-C7 cyclization to afford the aromatic ring and is eventually released as an aldehyde through the R-domain. The putative ketoreductase azaE is proposed to catalyze the reduction of the terminal ketone resulting in the early culture product FK17-P2a. The monooxygenase azaH was demonstrated to be the only enzyme required to convert FK17-P2a to azanigerone E. AzaH first hydroxylates the benzaldehyde intermediate FK17-P2a at C4, which triggers the formation of the pyran-ring to afford azanigerone E. In parallel, the 2,4-dimethylhexanoyl chain is synthesized by the HR-PKS azaB and is proposed to be transferred to the C4-hydroxyl of azanigerone E by the acyltransferase azaD directly from the ACP domain of azaB. Alternatively, the 2,4-dimethyl-hexanoyl chain may be offloaded from the HR-PKS as a carboxylic acid and converted to an acyl-CoA by azaF. The resulting acyl-CoA molecule could then be taken up as a substrate by AzaD to form azanigerone B. To yield the carboxylic acid substituent in azanigerone A, the hydroxypropyl side chain of azanigerone B would need to undergo a C-C oxidative cleavage catalyzed by cytochrome P450 AzaI. AzaI is proposed to act on a vicinal diol that leads to a C-C bond scission either through an alkoxyradical intermediate or a peroxy complex. In the biosynthesis of azanigerone A, azanigerone B first undergoes hydroxylation at C10, possibly catalyzed by one of the two FAD-dependent monooxygenases encoded in the cluster, azaG or azaL, resulting in the vicinal diol azanigerone C. Oxidative cleavage of azanigerone C by azaI would yield the corresponding aldehyde derivative of azanigerone A. Finally, the dehydrogenase azaJ is proposed to convert the aldehyde functional group into the carboxylic acid, completing the conversion from azanigerone B to azanigerone A. Alternatively, the oxidation of aldehyde to carboxylic acid may be catalyzed by the same P450 enzyme azaI via consecutive oxidation or by endogenous alcohol dehydrogenase. This chain is FAD-dependent monooxygenase azaH, found in Aspergillus niger (strain ATCC 1015 / CBS 113.46 / FGSC A1144 / LSHB Ac4 / NCTC 3858a / NRRL 328 / USDA 3528.7).